The sequence spans 65 residues: Large ribosomal subunit protein uL29c (65 aa).

It belongs to the universal ribosomal protein uL29 family.

Its subcellular location is the plastid. The protein resides in the chloroplast. In Guillardia theta (Cryptophyte), this protein is Large ribosomal subunit protein uL29c (rpl29).